The primary structure comprises 384 residues: Spermidine/putrescine import ATP-binding protein PotA (384 aa).

Residues 26–260 form the ABC transporter domain; sequence ISLEKVSKTY…PATRFVAGFI (235 aa). An ATP-binding site is contributed by 62-69; that stretch reads GPSGCGKT.

It belongs to the ABC transporter superfamily. Spermidine/putrescine importer (TC 3.A.1.11.1) family. As to quaternary structure, the complex is composed of two ATP-binding proteins (PotA), two transmembrane proteins (PotB and PotC) and a solute-binding protein (PotD).

The protein localises to the cell membrane. The enzyme catalyses ATP + H2O + polyamine-[polyamine-binding protein]Side 1 = ADP + phosphate + polyamineSide 2 + [polyamine-binding protein]Side 1.. Functionally, part of the ABC transporter complex PotABCD involved in spermidine/putrescine import. Responsible for energy coupling to the transport system. In Thermobifida fusca (strain YX), this protein is Spermidine/putrescine import ATP-binding protein PotA.